The chain runs to 63 residues: Lysis protein (63 aa).

The chain crosses the membrane as a helical span at residues 21-43; sequence LYVWIALAIVLSDFTSIFSHWIW.

It belongs to the Leviviricetes lysis protein family.

It localises to the host cell inner membrane. The protein localises to the host cell outer membrane. Its function is as follows. Induces the formation of specific membrane adhesion sites between the inner and outer membranes, apparently leading to host cell lysis. Lysis may be performed via activation of host murein hydrolases. The sequence is that of Lysis protein from Escherichia coli (Bacteriophage GA).